An 88-amino-acid chain; its full sequence is Small ribosomal subunit protein bS20 (88 aa).

This sequence belongs to the bacterial ribosomal protein bS20 family.

Binds directly to 16S ribosomal RNA. This is Small ribosomal subunit protein bS20 from Desulforamulus reducens (strain ATCC BAA-1160 / DSM 100696 / MI-1) (Desulfotomaculum reducens).